Consider the following 615-residue polypeptide: 1-deoxy-D-xylulose-5-phosphate synthase (615 aa).

Residues H72 and 111 to 113 contribute to the thiamine diphosphate site; that span reads GHS. D142 serves as a coordination point for Mg(2+). Residues 143–144, N171, Y278, and E360 each bind thiamine diphosphate; that span reads GA. N171 is a binding site for Mg(2+).

Belongs to the transketolase family. DXPS subfamily. Homodimer. Requires Mg(2+) as cofactor. Thiamine diphosphate serves as cofactor.

The catalysed reaction is D-glyceraldehyde 3-phosphate + pyruvate + H(+) = 1-deoxy-D-xylulose 5-phosphate + CO2. Its pathway is metabolic intermediate biosynthesis; 1-deoxy-D-xylulose 5-phosphate biosynthesis; 1-deoxy-D-xylulose 5-phosphate from D-glyceraldehyde 3-phosphate and pyruvate: step 1/1. Its function is as follows. Catalyzes the acyloin condensation reaction between C atoms 2 and 3 of pyruvate and glyceraldehyde 3-phosphate to yield 1-deoxy-D-xylulose-5-phosphate (DXP). The protein is 1-deoxy-D-xylulose-5-phosphate synthase of Campylobacter jejuni subsp. jejuni serotype O:2 (strain ATCC 700819 / NCTC 11168).